Consider the following 166-residue polypeptide: Urease accessory protein UreE (166 aa).

The protein belongs to the UreE family.

The protein resides in the cytoplasm. In terms of biological role, involved in urease metallocenter assembly. Binds nickel. Probably functions as a nickel donor during metallocenter assembly. The chain is Urease accessory protein UreE from Azotobacter vinelandii (strain DJ / ATCC BAA-1303).